A 456-amino-acid chain; its full sequence is MKKSPGLSDYLWAWTLFLSTLTGRSYGQPSLQDELKDNTTVFTRILDRLLDGYDNRLRPGLGERVTEVKTDIFVTSFGPVSDHDMEYTIDVFFRQSWKDERLKFKGPMTVLRLNNLMASKIWTPDTFFHNGKKSVAHNMTMPNKLLRITEDGTLLYTMRLTVRAECPMHLEDFPMDAHACPLKFGSYAYTRAEVVYEWTREPARSVVVAEDGSRLNQYDLLGQTVDSGIVQSSTGEYVVMTTHFHLKRKIGYFVIQTYLPCIMTVILSQVSFWLNRESVPARTVFGVTTVLTMTTLSISARNSLPKVAYATAMDWFIAVCYAFVFSALIEFATVNYFTKRGYAWDGKSVVPEKPKKVKDPLIKKNNTYAPTATSYTPNLARGDPGLATIAKSATIEPKEVKPETKPPEPKKTFNSVSKIDRLSRIAFPLLFGIFNLVYWATYLNREPQLKAPTPHQ.

The first 27 residues, Met1–Gly27, serve as a signal peptide directing secretion. Residues Gln28–Phe253 lie on the Extracellular side of the membrane. An N-linked (GlcNAc...) asparagine glycan is attached at Asn38. Residue Arg94 participates in 4-aminobutanoate binding. N-linked (GlcNAc...) asparagine glycosylation is present at Asn138. Thr157 contributes to the 4-aminobutanoate binding site. Cys166 and Cys180 form a disulfide bridge. The chain crosses the membrane as a helical span at residues Val254–Leu274. Residues Asn275 to Val279 are Cytoplasmic-facing. The chain crosses the membrane as a helical span at residues Pro280 to Arg301. Residues Asn302–Thr311 are Extracellular-facing. The helical transmembrane segment at Ala312–Thr333 threads the bilayer. Residues Val334–Arg421 are Cytoplasmic-facing. Residues Leu422 to Thr441 traverse the membrane as a helical segment. The Extracellular portion of the chain corresponds to Tyr442–Gln456.

The protein belongs to the ligand-gated ion channel (TC 1.A.9) family. Gamma-aminobutyric acid receptor (TC 1.A.9.5) subfamily. GABRA1 sub-subfamily. As to quaternary structure, heteropentamer, formed by a combination of alpha (GABRA1-6), beta (GABRB1-3), gamma (GABRG1-3), delta (GABRD), epsilon (GABRE), rho (GABRR1-3), pi (GABRP) and theta (GABRQ) subunits, each subunit exhibiting distinct physiological and pharmacological properties. Interacts with UBQLN1. Interacts with TRAK1. Interacts with KIF21B. Identified in a complex of 720 kDa composed of LHFPL4, NLGN2, GABRA1, GABRB2, GABRG2 and GABRB3. Interacts with LHFPL4. Interacts with NLGN2. Interacts with SHISA7; interaction leads to the regulation of GABA(A) receptor trafficking, channel deactivation kinetics and pharmacology. Cerebellar granule cells, Purkinje cells and stellate/basket cells.

Its subcellular location is the postsynaptic cell membrane. It is found in the cell membrane. The protein resides in the cytoplasmic vesicle membrane. The catalysed reaction is chloride(in) = chloride(out). With respect to regulation, allosterically activated by benzodiazepines, the neuroanesthetic alphaxalone and pentobarbital. Inhibited by the antagonist bicuculline. Potentiated by histamine. Its function is as follows. Alpha subunit of the heteropentameric ligand-gated chloride channel gated by gamma-aminobutyric acid (GABA), a major inhibitory neurotransmitter in the brain. GABA-gated chloride channels, also named GABA(A) receptors (GABAAR), consist of five subunits arranged around a central pore and contain GABA active binding site(s) located at the alpha and beta subunit interface(s). When activated by GABA, GABAARs selectively allow the flow of chloride anions across the cell membrane down their electrochemical gradient. Alpha-1/GABRA1-containing GABAARs are largely synaptic. Chloride influx into the postsynaptic neuron following GABAAR opening decreases the neuron ability to generate a new action potential, thereby reducing nerve transmission. GABAARs containing alpha-1 and beta-2 or -3 subunits exhibit synaptogenic activity; the gamma-2 subunit being necessary but not sufficient to induce rapid synaptic contacts formation. GABAARs function also as histamine receptor where histamine binds at the interface of two neighboring beta subunits and potentiates GABA response. GABAARs containing alpha, beta and epsilon subunits also permit spontaneous chloride channel activity while preserving the structural information required for GABA-gated openings. Alpha-1-mediated plasticity in the orbitofrontal cortex regulates context-dependent action selection. Together with rho subunits, may also control neuronal and glial GABAergic transmission in the cerebellum. This is Gamma-aminobutyric acid receptor subunit alpha-1 (GABRA1) from Bos taurus (Bovine).